We begin with the raw amino-acid sequence, 274 residues long: N-acetylmuramic acid 6-phosphate etherase (274 aa).

The SIS domain occupies 52–215 (IVPRMEQGGR…STSIMIRLGR (164 aa)). The active-site Proton donor is glutamate 80. Glutamate 111 is an active-site residue.

Belongs to the GCKR-like family. MurNAc-6-P etherase subfamily. In terms of assembly, homodimer.

It catalyses the reaction N-acetyl-D-muramate 6-phosphate + H2O = N-acetyl-D-glucosamine 6-phosphate + (R)-lactate. It participates in amino-sugar metabolism; N-acetylmuramate degradation. Specifically catalyzes the cleavage of the D-lactyl ether substituent of MurNAc 6-phosphate, producing GlcNAc 6-phosphate and D-lactate. The polypeptide is N-acetylmuramic acid 6-phosphate etherase (Porphyromonas gingivalis (strain ATCC 33277 / DSM 20709 / CIP 103683 / JCM 12257 / NCTC 11834 / 2561)).